Reading from the N-terminus, the 157-residue chain is Transcription initiation factor IIA large subunit (157 aa).

Belongs to the TFIIA subunit 1 family. As to quaternary structure, TFIIA is a heterodimer of the large subunit and the small subunit gamma.

The protein localises to the nucleus. In terms of biological role, TFIIA is a component of the transcription machinery of RNA polymerase II and plays an important role in transcriptional activation. This Encephalitozoon cuniculi (strain GB-M1) (Microsporidian parasite) protein is Transcription initiation factor IIA large subunit (TOA1).